A 549-amino-acid polypeptide reads, in one-letter code: RNA-induced transcriptional silencing complex protein tas3 (549 aa).

Disordered stretches follow at residues 89 to 111 (KNSP…VRAS), 126 to 184 (DGKE…SDSI), 202 to 225 (IRSS…SSKS), 298 to 361 (LDNF…HLEK), and 381 to 430 (AHFH…PLAS). Positions 298–307 (LDNFNRPSQQ) are enriched in polar residues. Basic and acidic residues-rich tracts occupy residues 328–361 (YDSY…HLEK) and 403–416 (SDRQ…ELPT). The segment covering 419 to 430 (LNASDSHNPLAS) has biased composition (polar residues).

As to quaternary structure, ago1, chp1 and tas3 interact to form the core of the RNA-induced transcriptional silencing (RITS) complex. The RITS complex interacts with the RDRC complex via interaction between ago1 and hrr1. Clr4 has a role in mediating this interaction.

It localises to the nucleus. The protein resides in the cytoplasm. Its subcellular location is the cytoskeleton. It is found in the microtubule organizing center. The protein localises to the spindle pole body. Its function is as follows. Has a role in the RNA interference (RNAi) pathway which is important for heterochromatin formation and accurate chromosome segregation. A member of the RNA-induced transcriptional silencing (RITS) complex which is involved in the biosynthesis of dsRNA from primer siRNAs provided by the RNA-directed RNA polymerase (RDRC) complex. In Schizosaccharomyces pombe (strain 972 / ATCC 24843) (Fission yeast), this protein is RNA-induced transcriptional silencing complex protein tas3 (tas3).